The following is an 869-amino-acid chain: Bifunctional uridylyltransferase/uridylyl-removing enzyme (869 aa).

Residues Met-1–Gln-332 are uridylyltransferase. Residues Leu-333–Leu-691 form a uridylyl-removing region. Residues Val-450–Leu-572 form the HD domain. 2 ACT domains span residues Glu-692–Arg-771 and Arg-798–Thr-869.

This sequence belongs to the GlnD family. Mg(2+) serves as cofactor.

It catalyses the reaction [protein-PII]-L-tyrosine + UTP = [protein-PII]-uridylyl-L-tyrosine + diphosphate. The enzyme catalyses [protein-PII]-uridylyl-L-tyrosine + H2O = [protein-PII]-L-tyrosine + UMP + H(+). With respect to regulation, uridylyltransferase (UTase) activity is inhibited by glutamine, while glutamine activates uridylyl-removing (UR) activity. Functionally, modifies, by uridylylation and deuridylylation, the PII regulatory proteins (GlnB and homologs), in response to the nitrogen status of the cell that GlnD senses through the glutamine level. Under low glutamine levels, catalyzes the conversion of the PII proteins and UTP to PII-UMP and PPi, while under higher glutamine levels, GlnD hydrolyzes PII-UMP to PII and UMP (deuridylylation). Thus, controls uridylylation state and activity of the PII proteins, and plays an important role in the regulation of nitrogen assimilation and metabolism. The chain is Bifunctional uridylyltransferase/uridylyl-removing enzyme from Xanthomonas campestris pv. campestris (strain B100).